The following is a 329-amino-acid chain: DNA-directed RNA polymerase subunit alpha (329 aa).

Residues 1–235 are alpha N-terminal domain (alpha-NTD); that stretch reads MQGSVTEFLK…EQLEAFVDLR (235 aa). The segment at 249-329 is alpha C-terminal domain (alpha-CTD); the sequence is FDPILLRPVD…NWPPASIADE (81 aa).

This sequence belongs to the RNA polymerase alpha chain family. In terms of assembly, homodimer. The RNAP catalytic core consists of 2 alpha, 1 beta, 1 beta' and 1 omega subunit. When a sigma factor is associated with the core the holoenzyme is formed, which can initiate transcription.

The catalysed reaction is RNA(n) + a ribonucleoside 5'-triphosphate = RNA(n+1) + diphosphate. In terms of biological role, DNA-dependent RNA polymerase catalyzes the transcription of DNA into RNA using the four ribonucleoside triphosphates as substrates. The sequence is that of DNA-directed RNA polymerase subunit alpha from Photorhabdus laumondii subsp. laumondii (strain DSM 15139 / CIP 105565 / TT01) (Photorhabdus luminescens subsp. laumondii).